We begin with the raw amino-acid sequence, 151 residues long: Apolipoprotein A-I (151 aa).

The first 18 residues, 1–18 (MKAVVLTLAVLFLTGSQA), serve as a signal peptide directing secretion. Positions 19–24 (RHFWQQ) are excised as a propeptide. 2 consecutive repeat copies span residues 67–88 (LKLL…EQIG) and 89–110 (PVTQ…QEMS). Positions 67 to 143 (LKLLDNWDTL…EVELYRQKVA (77 aa)) are 4 X approximate tandem repeats. M109 is modified (methionine sulfoxide). The stretch at 111 to 121 (KDLEEVKQKVQ) is one 3; half-length repeat. The stretch at 122–143 (PYLDDFQKKWQEEVELYRQKVA) is repeat 4.

The protein belongs to the apolipoprotein A1/A4/E family. Homodimer. Interacts with APOA1BP and CLU. Component of a sperm activating protein complex (SPAP), consisting of APOA1, an immunoglobulin heavy chain, an immunoglobulin light chain and albumin. Interacts with NDRG1. Interacts with SCGB3A2. Interacts with NAXE and YJEFN3. Glycosylated. Post-translationally, palmitoylated. In terms of processing, phosphorylation sites are present in the extracellular medium. As to expression, major protein of plasma HDL, also found in chylomicrons.

The protein resides in the secreted. Functionally, participates in the reverse transport of cholesterol from tissues to the liver for excretion by promoting cholesterol efflux from tissues and by acting as a cofactor for the lecithin cholesterol acyltransferase (LCAT). As part of the SPAP complex, activates spermatozoa motility. This chain is Apolipoprotein A-I (APOA1), found in Panthera tigris altaica (Siberian tiger).